The chain runs to 114 residues: Fumarate reductase subunit D (114 aa).

The next 3 helical transmembrane spans lie at 24-44, 50-70, and 92-112; these read VSAIFLPVVILIIGLLLPFGL, LITFAYSWIGKLVILVLTIFP, and GGFIFYGLATIYTVWVLFAVI.

It belongs to the FrdD family. Part of an enzyme complex containing four subunits: a flavoprotein (FrdA), an iron-sulfur protein (FrdB), and two hydrophobic anchor proteins (FrdC and FrdD).

Its subcellular location is the cell inner membrane. Anchors the catalytic components of the fumarate reductase complex to the cell membrane, binds quinones. The sequence is that of Fumarate reductase subunit D from Haemophilus influenzae (strain PittGG).